Reading from the N-terminus, the 463-residue chain is Nuclear hormone receptor family member nhr-79 (463 aa).

The segment at residues 3–81 (RGKCMVCDSP…AGMMRDLVQA (79 aa)) is a DNA-binding region (nuclear receptor). 2 consecutive NR C4-type zinc fingers follow at residues 6 to 27 (CMVC…CKAC) and 43 to 64 (CLGD…CRHC). Positions 83–119 (REIKSDKGKNSRNSSQSEDFFSPPPEQPGPSNYFDQF) are disordered. In terms of domain architecture, NR LBD spans 203–463 (YTEQVINLNM…ILKDMLKFQY (261 aa)).

Belongs to the nuclear hormone receptor family.

It localises to the nucleus. Its function is as follows. Orphan nuclear receptor. The chain is Nuclear hormone receptor family member nhr-79 (nhr-79) from Caenorhabditis elegans.